Consider the following 397-residue polypeptide: MTDHVREADDANIDDLLGDLGGTARAERAKLVEWLLEQGITPDEIRATNPPLLLATRHLVGDDGTYVSAREISENYGVDLELLQRVQRAVGLARVDDPDAVVHMRADGEAAARAQRFVELGLNPDQVVLVVRVLAEGLSHAAEAMRYTALEAIMRPGATELDIAKGSQALVSQIVPLLGPMIQDMLFMQLRHMMETEAVNAGERAAGKPLPGARQVTVAFADLVGFTQLGEVVSAEELGHLAGRLAGLARDLTAPPVWFIKTIGDAVMLVCPDPAPLLDTVLKLVEVVDTDNNFPRLRAGVASGMAVSRAGDWFGSPVNVASRVTGVARPGAVLVADSVREALGDAPEADGFQWSFAGPRRLRGIRGDVRLFRVRRGATRTGSGGAAQDDDLAGSSP.

Residues 1–191 form a regulatory domain region; it reads MTDHVREADD…IQDMLFMQLR (191 aa). Residues 192-206 form a linker region; sequence HMMETEAVNAGERAA. Residues 211-397 form a catalytic domain region; sequence PGARQVTVAF…QDDDLAGSSP (187 aa). Residues 217–325 enclose the Guanylate cyclase domain; it reads TVAFADLVGF…SPVNVASRVT (109 aa). D222 lines the Mn(2+) pocket. K261 contributes to the substrate binding site. D265 is a Mn(2+) binding site. R298 is an ATP binding site. Position 312 (D312) interacts with substrate.

Belongs to the adenylyl cyclase class-4/guanylyl cyclase family. In terms of assembly, homodimer. Mn(2+) is required as a cofactor. Mg(2+) serves as cofactor.

It carries out the reaction ATP = 3',5'-cyclic AMP + diphosphate. Its function is as follows. Catalyzes the formation of the second messenger cAMP. This chain is pH-sensitive adenylate cyclase MT1302, found in Mycobacterium tuberculosis (strain CDC 1551 / Oshkosh).